Reading from the N-terminus, the 443-residue chain is Delta(6)-fatty-acid desaturase fat-3 (443 aa).

The region spanning 1–71 (MVVDKNASGL…DLLKKHGEHD (71 aa)) is the Cytochrome b5 heme-binding domain. The next 3 helical transmembrane spans lie at 136–156 (IMAF…ACLL), 296–316 (TIVG…TWPL), and 318–338 (VAYF…VVTF).

This sequence belongs to the fatty acid desaturase type 1 family.

Its subcellular location is the membrane. It catalyses the reaction (9Z,12Z)-octadecadienoyl-CoA + 2 Fe(II)-[cytochrome b5] + O2 + 2 H(+) = (6Z,9Z,12Z)-octadecatrienoyl-CoA + 2 Fe(III)-[cytochrome b5] + 2 H2O. The enzyme catalyses (9Z,12Z,15Z)-octadecatrienoyl-CoA + 2 Fe(II)-[cytochrome b5] + O2 + 2 H(+) = (6Z,9Z,12Z,15Z)-octadecatetraenoyl-CoA + 2 Fe(III)-[cytochrome b5] + 2 H2O. It participates in lipid metabolism; polyunsaturated fatty acid biosynthesis. Can function as a Delta(6) fatty acid desaturase. Introduces a double bond in the fatty acid chain 6 carbons away from carboxy terminal to biosynthesize polyunsaturated fatty acids (PUFAs) endogenously (PUFAs are essential for membrane structure and many cellular and physiological processes). Acts on a variety of substrates such as linoleoyl-CoA ((9Z,12Z)-octadecadienoyl-CoA, C18:2n-6) and alpha-linolenoyl-CoA ((9Z,12Z,15Z)-octadecatrienoyl-CoA, C18:3n-3) to produce gamma-linolenoyl-CoA ((6Z,9Z,12Z)-octadecatrienoyl-CoA, C18:3n-6) and (6Z,9Z,12Z,15Z)-octadecatetraenoyl-CoA (18:4n-3) respectively. Unlike plants, Caenorhabditis elegans desaturases seem to use fatty acyl-CoAs as substrates. Plays a role in synaptic vesicle recycling by regulating synaptojanin unc-26 localization at synapses. The polypeptide is Delta(6)-fatty-acid desaturase fat-3 (fat-3) (Caenorhabditis elegans).